The chain runs to 189 residues: RPW8-like protein 1 (189 aa).

An RPW8 domain is found at M1–E153. The chain crosses the membrane as a helical span at residues L7–I24. Coiled-coil stretches lie at residues F65 to R92 and D126 to Q147. N177 carries N-linked (GlcNAc...) asparagine glycosylation.

Belongs to the plant RPW8 protein family.

The protein resides in the membrane. Functionally, probable disease resistance (R) protein. The polypeptide is RPW8-like protein 1 (Arabidopsis thaliana (Mouse-ear cress)).